We begin with the raw amino-acid sequence, 612 residues long: Dihydroxy-acid dehydratase (612 aa).

Aspartate 81 is a binding site for Mg(2+). [2Fe-2S] cluster is bound at residue cysteine 122. Mg(2+) is bound by residues aspartate 123 and lysine 124. Lysine 124 carries the post-translational modification N6-carboxylysine. Cysteine 193 contributes to the [2Fe-2S] cluster binding site. Glutamate 489 is a binding site for Mg(2+). Serine 515 (proton acceptor) is an active-site residue.

This sequence belongs to the IlvD/Edd family. Homodimer. [2Fe-2S] cluster is required as a cofactor. The cofactor is Mg(2+).

It carries out the reaction (2R)-2,3-dihydroxy-3-methylbutanoate = 3-methyl-2-oxobutanoate + H2O. The catalysed reaction is (2R,3R)-2,3-dihydroxy-3-methylpentanoate = (S)-3-methyl-2-oxopentanoate + H2O. The protein operates within amino-acid biosynthesis; L-isoleucine biosynthesis; L-isoleucine from 2-oxobutanoate: step 3/4. It participates in amino-acid biosynthesis; L-valine biosynthesis; L-valine from pyruvate: step 3/4. Its function is as follows. Functions in the biosynthesis of branched-chain amino acids. Catalyzes the dehydration of (2R,3R)-2,3-dihydroxy-3-methylpentanoate (2,3-dihydroxy-3-methylvalerate) into 2-oxo-3-methylpentanoate (2-oxo-3-methylvalerate) and of (2R)-2,3-dihydroxy-3-methylbutanoate (2,3-dihydroxyisovalerate) into 2-oxo-3-methylbutanoate (2-oxoisovalerate), the penultimate precursor to L-isoleucine and L-valine, respectively. The sequence is that of Dihydroxy-acid dehydratase from Xanthomonas euvesicatoria pv. vesicatoria (strain 85-10) (Xanthomonas campestris pv. vesicatoria).